The following is a 393-amino-acid chain: (S)-mandelate dehydrogenase (393 aa).

The FMN hydroxy acid dehydrogenase domain occupies 1-377; the sequence is MSQNLFNVED…SPDYLQNEGV (377 aa). Tyrosine 26 contributes to the (S)-mandelate binding site. Residues 79–81, serine 108, and glutamine 129 each bind FMN; that span reads PTG. Residue tyrosine 131 participates in (S)-mandelate binding. Position 156 (threonine 156) interacts with FMN. Residue arginine 165 coordinates (S)-mandelate. FMN is bound at residue lysine 250. (S)-mandelate contacts are provided by histidine 274 and arginine 277. The Proton acceptor role is filled by histidine 274. Residues 303–307 and 326–327 each bind FMN; these read DSGFR and GR.

Belongs to the FMN-dependent alpha-hydroxy acid dehydrogenase family. Homotetramer. The cofactor is FMN.

Its subcellular location is the cell inner membrane. The catalysed reaction is (S)-mandelate + A = phenylglyoxylate + AH2. The protein operates within aromatic compound metabolism; (R)-mandelate degradation; benzoate from (R)-mandelate: step 2/4. Catalyzes the dehydrogenation of (S)-mandelate to phenylglyoxylate (benzoylformate). Is likely involved in the utilization of mandelate as a sole source of carbon and energy for growth. Active in vitro with the artificial electron acceptors 2,6-dichlorophenolindophenol (DCPIP) or ferricyanide, but in vivo most likely transfer the electron pair from the reduced flavin to a component of the electron transport chain in the membrane, possibly a quinone. Shows very low activity with oxygen as the electron acceptor, and also with 3-indolelactate and medium chain 2-hydroxyacids as substrates. This Pseudomonas putida (Arthrobacter siderocapsulatus) protein is (S)-mandelate dehydrogenase.